The following is a 45-amino-acid chain: Iota-conotoxin-like R11.12 (45 aa).

4 disulfide bridges follow: Cys-5/Cys-19, Cys-12/Cys-22, Cys-18/Cys-27, and Cys-21/Cys-36. Leu-43 carries the D-leucine modification. Position 45 (Arg-45) is a propeptide, removed by a carboxypeptidase.

Belongs to the conotoxin I1 superfamily. As to expression, expressed by the venom duct.

It is found in the secreted. In terms of biological role, iota-conotoxins bind to voltage-gated sodium channels (Nav) and act as agonists by shifting the voltage-dependence of activation to more hyperpolarized levels. Produces general excitatory symptoms. The polypeptide is Iota-conotoxin-like R11.12 (Conus radiatus (Rayed cone)).